The following is a 207-amino-acid chain: Redox-sensing transcriptional repressor Rex (207 aa).

The segment at residues 17–56 (IYLRYLSYLQQVEVTTVSSQQMGKNLDVNPAQIRKDLAAF) is a DNA-binding region (H-T-H motif). 91-96 (GAGHLG) serves as a coordination point for NAD(+).

This sequence belongs to the transcriptional regulatory Rex family. In terms of assembly, homodimer.

The protein resides in the cytoplasm. Its function is as follows. Modulates transcription in response to changes in cellular NADH/NAD(+) redox state. In Brevibacillus brevis (strain 47 / JCM 6285 / NBRC 100599), this protein is Redox-sensing transcriptional repressor Rex.